Consider the following 623-residue polypeptide: DNA mismatch repair protein MutL (623 aa).

Polar residues predominate over residues 353–368 (AQQSAPRPANSYSPAS). Residues 353 to 389 (AQQSAPRPANSYSPASWRTAPPAPRSEWSPQTAHPAH) are disordered.

It belongs to the DNA mismatch repair MutL/HexB family.

In terms of biological role, this protein is involved in the repair of mismatches in DNA. It is required for dam-dependent methyl-directed DNA mismatch repair. May act as a 'molecular matchmaker', a protein that promotes the formation of a stable complex between two or more DNA-binding proteins in an ATP-dependent manner without itself being part of a final effector complex. This chain is DNA mismatch repair protein MutL, found in Brucella melitensis biotype 1 (strain ATCC 23456 / CCUG 17765 / NCTC 10094 / 16M).